Here is a 408-residue protein sequence, read N- to C-terminus: Argininosuccinate synthase (408 aa).

ATP contacts are provided by residues 16–24 (AYSGGLDTS) and Ala44. Positions 96 and 101 each coordinate L-citrulline. Gly126 contacts ATP. L-aspartate contacts are provided by Thr128, Asn132, and Asp133. Asn132 contacts L-citrulline. L-citrulline is bound by residues Arg136, Ser185, Ser194, Glu270, and Tyr282.

The protein belongs to the argininosuccinate synthase family. Type 1 subfamily. Homotetramer.

The protein resides in the cytoplasm. It carries out the reaction L-citrulline + L-aspartate + ATP = 2-(N(omega)-L-arginino)succinate + AMP + diphosphate + H(+). Its pathway is amino-acid biosynthesis; L-arginine biosynthesis; L-arginine from L-ornithine and carbamoyl phosphate: step 2/3. The sequence is that of Argininosuccinate synthase from Shewanella woodyi (strain ATCC 51908 / MS32).